We begin with the raw amino-acid sequence, 661 residues long: Peroxisomal acyl-coenzyme A oxidase 1 (661 aa).

Residue serine 26 is modified to Phosphoserine. An N6-acetyllysine modification is found at lysine 65. N6-succinyllysine is present on lysine 89. Threonine 139 contacts FAD. Lysine 159 bears the N6-succinyllysine mark. FAD is bound at residue glycine 178. Lysine 216 bears the N6-acetyllysine mark. N6-succinyllysine is present on lysine 241. An N6-acetyllysine mark is found at lysine 255, lysine 267, and lysine 272. Lysine 349 bears the N6-succinyllysine mark. Catalysis depends on glutamate 421, which acts as the Proton acceptor. Residues lysine 437 and lysine 446 each carry the N6-acetyllysine; alternate modification. Lysine 437 and lysine 446 each carry N6-succinyllysine; alternate. The residue at position 500 (lysine 500) is an N6-acetyllysine. N6-acetyllysine; alternate is present on lysine 512. Lysine 512 is subject to N6-succinyllysine; alternate. Residue lysine 542 is modified to N6-succinyllysine. Lysine 637 is modified (N6-acetyllysine; alternate). Lysine 637 bears the N6-succinyllysine; alternate mark. At lysine 643 the chain carries N6-succinyllysine. A Phosphoserine modification is found at serine 649. Residue lysine 652 is modified to N6-acetyllysine. Position 655 is an N6-succinyllysine (lysine 655). The short motif at 659 to 661 (SKL) is the Microbody targeting signal element.

It belongs to the acyl-CoA oxidase family. In terms of assembly, homodimer. Interacts with LONP2. FAD is required as a cofactor.

Its subcellular location is the peroxisome. The enzyme catalyses a 2,3-saturated acyl-CoA + O2 = a (2E)-enoyl-CoA + H2O2. The catalysed reaction is hexadecanoyl-CoA + O2 = (2E)-hexadecenoyl-CoA + H2O2. It catalyses the reaction dodecanoyl-CoA + O2 = (2E)-dodecenoyl-CoA + H2O2. It carries out the reaction octanoyl-CoA + O2 = (2E)-octenoyl-CoA + H2O2. The enzyme catalyses decanoyl-CoA + O2 = (2E)-decenoyl-CoA + H2O2. The catalysed reaction is tetradecanoyl-CoA + O2 = (2E)-tetradecenoyl-CoA + H2O2. It catalyses the reaction hexadecanedioyl-CoA + O2 = (2E)-hexadecenedioyl-CoA + H2O2. It carries out the reaction tetracosanoyl-CoA + O2 = (2E)-tetracosenoyl-CoA + H2O2. The enzyme catalyses glutaryl-CoA + O2 = (2E)-glutaconyl-CoA + H2O2. The catalysed reaction is hexanoyl-CoA + O2 = (2E)-hexenoyl-CoA + H2O2. It catalyses the reaction octadecanoyl-CoA + O2 = (2E)-octadecenoyl-CoA + H2O2. It carries out the reaction (5Z,8Z,11Z,14Z,17Z)-eicosapentaenoyl-CoA + O2 = (2E,5Z,8Z,11Z,14Z,17Z)-icosahexaenoyl-CoA + H2O2. The enzyme catalyses (6Z,9Z,12Z,15Z,18Z,21Z)-tetracosahexaenoyl-CoA + O2 = (2E,6Z,9Z,12Z,15Z,18Z,21Z)-tetracosaheptaenoyl-CoA + H2O2. Its pathway is lipid metabolism; peroxisomal fatty acid beta-oxidation. Involved in the initial and rate-limiting step of peroxisomal beta-oxidation of straight-chain saturated and unsaturated very-long-chain fatty acids. Catalyzes the desaturation of fatty acyl-CoAs such as palmitoyl-CoA (hexadecanoyl-CoA) to 2-trans-enoyl-CoAs ((2E)-enoyl-CoAs) such as (2E)-hexadecenoyl-CoA, and donates electrons directly to molecular oxygen (O(2)), thereby producing hydrogen peroxide (H(2)O(2)). The chain is Peroxisomal acyl-coenzyme A oxidase 1 from Cavia porcellus (Guinea pig).